Reading from the N-terminus, the 1902-residue chain is Plexin-B3 (1902 aa).

The N-terminal stretch at 1-36 is a signal peptide; that stretch reads MLTDFLQAPVMAPWSPFSLHLLLLFLPLLPLTRVHR. A Sema domain is found at 37–461; it reads FSVPNTSFNH…TAQQVDRILV (425 aa). Over 37–1245 the chain is Extracellular; it reads FSVPNTSFNH…MMSTFPVEAQ (1209 aa). The N-linked (GlcNAc...) asparagine glycan is linked to Asn41. 2 disulfides stabilise this stretch: Cys88–Cys97 and Cys122–Cys130. An N-linked (GlcNAc...) asparagine glycan is attached at Asn221. 3 disulfides stabilise this stretch: Cys257/Cys360, Cys273/Cys305, and Cys323/Cys347. Residues 353-372 are disordered; sequence DSPESYPCGDEHTPSPIAGR. Residues Asn416 and Asn469 are each glycosylated (N-linked (GlcNAc...) asparagine). The 53-residue stretch at 463 to 515 folds into the PSI 1 domain; sequence ACPQFPNCTTCLQARDPLCGWCILQGRCTRRGECGRAAQPNHWLWSYEDNHCP. Intrachain disulfides connect Cys464/Cys481, Cys470/Cys514, Cys473/Cys490, Cys484/Cys496, and Cys551/Cys569. PSI domains are found at residues 609-671 and 776-822; these read DCSA…EACP and DCAM…QLCP. Asn791, Asn889, Asn910, Asn946, Asn1090, and Asn1207 each carry an N-linked (GlcNAc...) asparagine glycan. IPT/TIG domains follow at residues 823–914, 915–1001, 1003–1134, and 1154–1221; these read IPSI…FTYQ, DPVL…FRYT, NPQL…FLYQ, and KPGH…QMGN. Residues 1246–1266 form a helical membrane-spanning segment; the sequence is LGLGMGAAVLIAAVLLLTLMY. The Cytoplasmic segment spans residues 1267–1902; sequence RHKSKKALRD…ALVEYKVTDL (636 aa).

The protein belongs to the plexin family. As to quaternary structure, binds MET and MST1R. Interacts with RIT2/RIN. May form homodimers (via Sema domain). Interacts (via cytoplasmic domain) with FSCN1, ARHGDIA and RAC1. Expressed in brain (at protein level). In cerebellum, strongest expression detected in Purkinje and granular cells. Detected at very low levels in several fetal tissues, including dorsal root ganglia (DRG), heart, lung, optic bulb, brain and liver.

The protein resides in the cell membrane. Receptor for SEMA5A that plays a role in axon guidance, invasive growth and cell migration. Stimulates neurite outgrowth and mediates Ca(2+)/Mg(2+)-dependent cell aggregation. In glioma cells, SEMA5A stimulation of PLXNB3 results in the disassembly of F-actin stress fibers, disruption of focal adhesions and cellular collapse as well as inhibition of cell migration and invasion through ARHGDIA-mediated inactivation of RAC1. Seem to be non-essential for normal development and function of the central nervous system. This chain is Plexin-B3 (Plxnb3), found in Mus musculus (Mouse).